A 489-amino-acid chain; its full sequence is MSVYGLQRLYIGGGYVDATSGKTFDTFDPATGELLAQVQQASAADVDRAVASAQEGQREWATMTAMQRSRILRRAVDLLRERNDELAAIETRDTGKPIGETLAVDIVTGADVIEYYAGLATAIEGLQVPLRAESFVYTRREPLGVCAGIGAWNYPIQIACWKTAPALAAGNAMVFKPSEVTPLTALKLAEIYTEAGVPAGVFNVVQGDGSVGALLTGHPDIAKVSFTGGVETGKKVMSLAGASSLKEVTMELGGKSPLIVFDDADLDRAADIAVTANFFSSGQVCTNGTRVFVHRSIKDAFTQKVLERVKRIRVGKPTDADTNFGPLVSAAQLDKVLGFIESGKAEGAKLLAGGTRLTDGHFGSGQYVAPTVFGDCRDDMKIVREEIFGPVMSILEFESEDEVIARANDTHYGLAAGVVTENLSRAHRTIHRLEAGICWINTWGESPAEMPVGGYKQSGVGRENGITTLEHYTRIKSVQVELGRYNPVF.

Residues threonine 26 and aspartate 93 each contribute to the K(+) site. 150–152 is an NAD(+) binding site; sequence GAW. Catalysis depends on lysine 162, which acts as the Charge relay system. 176-179 lines the NAD(+) pocket; the sequence is KPSE. Residue valine 180 participates in K(+) binding. An NAD(+)-binding site is contributed by 229 to 232; the sequence is GVET. Leucine 245 is a binding site for K(+). Glutamate 251 acts as the Proton acceptor in catalysis. NAD(+) is bound by residues glycine 253, cysteine 285, and glutamate 386. Cysteine 285 acts as the Nucleophile in catalysis. Position 285 is a cysteine sulfenic acid (-SOH) (cysteine 285). K(+) is bound by residues lysine 456 and glycine 459. Glutamate 463 functions as the Charge relay system in the catalytic mechanism.

The protein belongs to the aldehyde dehydrogenase family. Dimer of dimers. Requires K(+) as cofactor.

It catalyses the reaction betaine aldehyde + NAD(+) + H2O = glycine betaine + NADH + 2 H(+). It functions in the pathway amine and polyamine biosynthesis; betaine biosynthesis via choline pathway; betaine from betaine aldehyde: step 1/1. Its function is as follows. Involved in the biosynthesis of the osmoprotectant glycine betaine. Catalyzes the irreversible oxidation of betaine aldehyde to the corresponding acid. The protein is Betaine aldehyde dehydrogenase of Burkholderia orbicola (strain MC0-3).